The sequence spans 184 residues: Outer-membrane lipoprotein carrier protein (184 aa).

The first 19 residues, 1–19 (MKAFLKILMVLIFVSVAYA), serve as a signal peptide directing secretion.

Belongs to the LolA family. Monomer.

It is found in the periplasm. In terms of biological role, participates in the translocation of lipoproteins from the inner membrane to the outer membrane. Only forms a complex with a lipoprotein if the residue after the N-terminal Cys is not an aspartate (The Asp acts as a targeting signal to indicate that the lipoprotein should stay in the inner membrane). The sequence is that of Outer-membrane lipoprotein carrier protein from Helicobacter pylori (strain P12).